Here is a 532-residue protein sequence, read N- to C-terminus: Cilia- and flagella-associated protein 97 (532 aa).

Ser19 is modified (phosphoserine). Disordered stretches follow at residues 28 to 83 (ETNS…PVEN), 116 to 263 (IPNR…TPDI), 306 to 333 (KAAK…SLDH), 398 to 421 (LSRQ…PPKL), and 485 to 532 (GQYS…TAWL). Positions 35–49 (KQNDDPKERIDKDTK) are enriched in basic and acidic residues. Residues 50 to 63 (NVNSNTGMQTTENY) show a composition bias toward polar residues. The span at 67–82 (KGNERNVKFPPEHPVE) shows a compositional bias: basic and acidic residues. Positions 127–139 (GEDDYYTDGEESS) are enriched in acidic residues. A Phosphothreonine modification is found at Thr133. Residues Ser138 and Ser139 each carry the phosphoserine modification. 2 stretches are compositionally biased toward low complexity: residues 170–185 (SSSS…SGSG) and 194–205 (DSHLSDSSPSSK). Ser218 carries the post-translational modification Phosphoserine. Residues 227-239 (IKSTETQPSSTTP) are compositionally biased toward polar residues. Ser248 carries the post-translational modification Phosphoserine. Polar residues predominate over residues 253–263 (TDVSPLSTPDI). A compositionally biased stretch (low complexity) spans 320–329 (SSKSSSVLDS). Ser330 carries the phosphoserine modification. The stretch at 374–450 (GKNYSFTREE…ALLKRLEAVK (77 aa)) forms a coiled coil. Over residues 493–503 (SRTSSATSGLS) the composition is skewed to polar residues.

Belongs to the CFAP97 family.

In Homo sapiens (Human), this protein is Cilia- and flagella-associated protein 97.